A 403-amino-acid polypeptide reads, in one-letter code: MSKFNRIHLVVLDSVGIGAAPDANNFVNAGVPDGASDTLGHISKTVGLNVPNMAKIGLGNIPRETPLKTVAAEINPTGYATKLEEVSLGKDTMTGHWEIMGLNITEPFDTFWNGFPEEILTKIEEFSGRKVIREANKPYSGTAVIDDFGPRQMETGELIIYTSADPVLQIAAHEDIIPLDELYRICEYARSITLERPALLGRIIARPYVGEPGNFTRTANRRDLAVSPFSPTVLDKLNEADIDTYAVGKINDIFNGAGINHDMGHNKSNSHGIDTLLKTMGLAEFEKGFSFTNLVDFDALYGHRRNAHGYRDCLHEFDERLPEIIAAMRENDLLLITADHGNDPTYAGTDHTREYIPLLAYSPAFKGNGLIPVGHFADISATVADNFGVETAMIGESFLDKLV.

The Mn(2+) site is built by Asp13, Asp298, His303, Asp339, His340, and His351.

The protein belongs to the phosphopentomutase family. Requires Mn(2+) as cofactor.

It localises to the cytoplasm. It carries out the reaction 2-deoxy-alpha-D-ribose 1-phosphate = 2-deoxy-D-ribose 5-phosphate. It catalyses the reaction alpha-D-ribose 1-phosphate = D-ribose 5-phosphate. It functions in the pathway carbohydrate degradation; 2-deoxy-D-ribose 1-phosphate degradation; D-glyceraldehyde 3-phosphate and acetaldehyde from 2-deoxy-alpha-D-ribose 1-phosphate: step 1/2. Its function is as follows. Isomerase that catalyzes the conversion of deoxy-ribose 1-phosphate (dRib-1-P) and ribose 1-phosphate (Rib-1-P) to deoxy-ribose 5-phosphate (dRib-5-P) and ribose 5-phosphate (Rib-5-P), respectively. This is Phosphopentomutase from Streptococcus pneumoniae serotype 19F (strain G54).